The primary structure comprises 388 residues: Diphosphomevalonate decarboxylase (388 aa).

(R)-5-diphosphomevalonate is bound by residues 19 to 22 (YWGK), arginine 74, 153 to 158 (SGSACR), and threonine 209. Residues 367–388 (QGPQGSSESLINDKGLPKAVAN) are disordered.

This sequence belongs to the diphosphomevalonate decarboxylase family. In terms of assembly, homodimer.

It carries out the reaction (R)-5-diphosphomevalonate + ATP = isopentenyl diphosphate + ADP + phosphate + CO2. The protein operates within isoprenoid biosynthesis; isopentenyl diphosphate biosynthesis via mevalonate pathway; isopentenyl diphosphate from (R)-mevalonate: step 3/3. Diphosphomevalonate decarboxylase; part of the second module of ergosterol biosynthesis pathway that includes the middle steps of the pathway. The second module is carried out in the vacuole and involves the formation of farnesyl diphosphate, which is also an important intermediate in the biosynthesis of ubiquinone, dolichol, heme and prenylated proteins. Activity by the mevalonate kinase ERG12 first converts mevalonate into 5-phosphomevalonate. 5-phosphomevalonate is then further converted to 5-diphosphomevalonate by the phosphomevalonate kinase ERG8. The diphosphomevalonate decarboxylase MVD1/ERG19 then produces isopentenyl diphosphate. The isopentenyl-diphosphate delta-isomerase IDI1 then catalyzes the 1,3-allylic rearrangement of the homoallylic substrate isopentenyl (IPP) to its highly electrophilic allylic isomer, dimethylallyl diphosphate (DMAPP). Finally the farnesyl diphosphate synthase ERG20 catalyzes the sequential condensation of isopentenyl pyrophosphate with dimethylallyl pyrophosphate, and then with the resultant geranylpyrophosphate to the ultimate product farnesyl pyrophosphate. In Debaryomyces hansenii (strain ATCC 36239 / CBS 767 / BCRC 21394 / JCM 1990 / NBRC 0083 / IGC 2968) (Yeast), this protein is Diphosphomevalonate decarboxylase.